The chain runs to 226 residues: ATP-dependent dethiobiotin synthetase BioD (226 aa).

Residue 12 to 17 (GVGKTV) coordinates ATP. Thr-16 is a Mg(2+) binding site. Lys-37 is a catalytic residue. Residue Thr-41 coordinates substrate. ATP contacts are provided by residues Asp-49, 108–111 (EGAG), and 197–199 (PAG). Residues Asp-49 and Glu-108 each contribute to the Mg(2+) site.

The protein belongs to the dethiobiotin synthetase family. As to quaternary structure, homodimer. Mg(2+) serves as cofactor.

The protein localises to the cytoplasm. It catalyses the reaction (7R,8S)-7,8-diammoniononanoate + CO2 + ATP = (4R,5S)-dethiobiotin + ADP + phosphate + 3 H(+). It functions in the pathway cofactor biosynthesis; biotin biosynthesis; biotin from 7,8-diaminononanoate: step 1/2. Its function is as follows. Catalyzes a mechanistically unusual reaction, the ATP-dependent insertion of CO2 between the N7 and N8 nitrogen atoms of 7,8-diaminopelargonic acid (DAPA, also called 7,8-diammoniononanoate) to form a ureido ring. The polypeptide is ATP-dependent dethiobiotin synthetase BioD (Mycobacterium avium (strain 104)).